Reading from the N-terminus, the 286-residue chain is Pyridoxal kinase PdxY (286 aa).

Substrate contacts are provided by residues serine 9 and 44–45 (TQ). Residues aspartate 111, glutamate 148, and lysine 181 each contribute to the ATP site. A substrate-binding site is contributed by aspartate 222.

Belongs to the pyridoxine kinase family. PdxY subfamily. As to quaternary structure, homodimer. It depends on Mg(2+) as a cofactor.

It carries out the reaction pyridoxal + ATP = pyridoxal 5'-phosphate + ADP + H(+). It functions in the pathway cofactor metabolism; pyridoxal 5'-phosphate salvage; pyridoxal 5'-phosphate from pyridoxal: step 1/1. Its function is as follows. Pyridoxal kinase involved in the salvage pathway of pyridoxal 5'-phosphate (PLP). Catalyzes the phosphorylation of pyridoxal to PLP. This Pasteurella multocida (strain Pm70) protein is Pyridoxal kinase PdxY.